Here is a 217-residue protein sequence, read N- to C-terminus: MIGKLTGILDSVFEDHIILDVQGVGYVVFLSNRLLSSLPERGQAVSLFIETHVREDAIRLFGFETKVEQDWFCLLQNVRGVGAKVALAILSTLPPPQLAQAITLSDIAMISRSPGVGKMVSERIINELKNKALPSNAPHQSMPHFVSYSSETSSQAGTQHTGHQHSMDALAALTKLGFERDQATHALQEAIKAFEGETPSSALLIRHSLKLLSSHLK.

Positions M1–E64 are domain I. The segment at T65–F145 is domain II. The tract at residues V146–H160 is flexible linker. Residues T161–K217 are domain III.

This sequence belongs to the RuvA family. In terms of assembly, homotetramer. Forms an RuvA(8)-RuvB(12)-Holliday junction (HJ) complex. HJ DNA is sandwiched between 2 RuvA tetramers; dsDNA enters through RuvA and exits via RuvB. An RuvB hexamer assembles on each DNA strand where it exits the tetramer. Each RuvB hexamer is contacted by two RuvA subunits (via domain III) on 2 adjacent RuvB subunits; this complex drives branch migration. In the full resolvosome a probable DNA-RuvA(4)-RuvB(12)-RuvC(2) complex forms which resolves the HJ.

Its subcellular location is the cytoplasm. Functionally, the RuvA-RuvB-RuvC complex processes Holliday junction (HJ) DNA during genetic recombination and DNA repair, while the RuvA-RuvB complex plays an important role in the rescue of blocked DNA replication forks via replication fork reversal (RFR). RuvA specifically binds to HJ cruciform DNA, conferring on it an open structure. The RuvB hexamer acts as an ATP-dependent pump, pulling dsDNA into and through the RuvAB complex. HJ branch migration allows RuvC to scan DNA until it finds its consensus sequence, where it cleaves and resolves the cruciform DNA. The protein is Holliday junction branch migration complex subunit RuvA of Bartonella bacilliformis (strain ATCC 35685 / KC583 / Herrer 020/F12,63).